Consider the following 221-residue polypeptide: GTP cyclohydrolase 1 (221 aa).

Residues Cys109, His112, and Cys180 each contribute to the Zn(2+) site.

Belongs to the GTP cyclohydrolase I family. As to quaternary structure, toroid-shaped homodecamer, composed of two pentamers of five dimers.

It catalyses the reaction GTP + H2O = 7,8-dihydroneopterin 3'-triphosphate + formate + H(+). It functions in the pathway cofactor biosynthesis; 7,8-dihydroneopterin triphosphate biosynthesis; 7,8-dihydroneopterin triphosphate from GTP: step 1/1. This Blochmanniella pennsylvanica (strain BPEN) protein is GTP cyclohydrolase 1.